A 458-amino-acid chain; its full sequence is UDP-N-acetylmuramate--L-alanine ligase (458 aa).

An ATP-binding site is contributed by 119–125 (GTHGKTT).

It belongs to the MurCDEF family.

It localises to the cytoplasm. The enzyme catalyses UDP-N-acetyl-alpha-D-muramate + L-alanine + ATP = UDP-N-acetyl-alpha-D-muramoyl-L-alanine + ADP + phosphate + H(+). Its pathway is cell wall biogenesis; peptidoglycan biosynthesis. Cell wall formation. This chain is UDP-N-acetylmuramate--L-alanine ligase, found in Phocaeicola vulgatus (strain ATCC 8482 / DSM 1447 / JCM 5826 / CCUG 4940 / NBRC 14291 / NCTC 11154) (Bacteroides vulgatus).